The chain runs to 165 residues: Keratin-associated protein 5-7 (165 aa).

7 consecutive repeat copies span residues 35 to 38 (CCVP), 41 to 44 (CCKP), 47 to 50 (CCVP), 116 to 119 (CCKP), 126 to 129 (CCKP), 145 to 148 (CCNP), and 155 to 158 (CCVP). A 7 X 4 AA repeats of C-C-X-P region spans residues 35 to 158 (CCVPVCCCKP…CCSQSSCCVP (124 aa)).

The protein belongs to the KRTAP type 5 family. Interacts with hair keratins. As to expression, expressed in hair root but not in skin.

In terms of biological role, in the hair cortex, hair keratin intermediate filaments are embedded in an interfilamentous matrix, consisting of hair keratin-associated protein (KRTAP), which are essential for the formation of a rigid and resistant hair shaft through their extensive disulfide bond cross-linking with abundant cysteine residues of hair keratins. The matrix proteins include the high-sulfur and high-glycine-tyrosine keratins. This is Keratin-associated protein 5-7 (KRTAP5-7) from Homo sapiens (Human).